We begin with the raw amino-acid sequence, 221 residues long: GTP cyclohydrolase III (221 aa).

It belongs to the archaeal-type GTP cyclohydrolase family.

It catalyses the reaction GTP + 3 H2O = 2-amino-5-formylamino-6-(5-phospho-D-ribosylamino)pyrimidin-4(3H)-one + 2 phosphate + 2 H(+). Its function is as follows. Catalyzes the formation of 2-amino-5-formylamino-6-ribofuranosylamino-4(3H)-pyrimidinone ribonucleotide monophosphate and inorganic phosphate from GTP. Also has an independent pyrophosphate phosphohydrolase activity. In Pyrobaculum islandicum (strain DSM 4184 / JCM 9189 / GEO3), this protein is GTP cyclohydrolase III.